A 285-amino-acid chain; its full sequence is NADH-cytochrome b5 reductase 1 (285 aa).

Residues Leu-7–Ser-23 form a helical membrane-spanning segment. One can recognise an FAD-binding FR-type domain in the interval Thr-40 to Val-144. Residues Gly-124–Gly-139 and His-150–Leu-182 contribute to the FAD site.

It belongs to the flavoprotein pyridine nucleotide cytochrome reductase family. As to quaternary structure, monomer. Component of the 2-(3-amino-3-carboxypropyl)histidine synthase complex composed of DPH1, DPH2, DPH3 and a NADH-dependent reductase, predominantly CBR1. Requires FAD as cofactor.

The protein localises to the mitochondrion outer membrane. The catalysed reaction is 2 Fe(III)-[cytochrome b5] + NADH = 2 Fe(II)-[cytochrome b5] + NAD(+) + H(+). It carries out the reaction 2 Fe(3+)-[Dph3] + NADH = 2 Fe(2+)-[Dph3] + NAD(+) + H(+). It functions in the pathway protein modification; peptidyl-diphthamide biosynthesis. Its function is as follows. NADH-dependent reductase for DPH3 and cytochrome b5. Required for the first step of diphthamide biosynthesis, a post-translational modification of histidine which occurs in elongation factor 2. DPH1 and DPH2 transfer a 3-amino-3-carboxypropyl (ACP) group from S-adenosyl-L-methionine (SAM) to a histidine residue, the reaction is assisted by a reduction system comprising DPH3 and a NADH-dependent reductase, predominantly CBR1. By reducing DPH3, also involved in the formation of the tRNA wobble base modification mcm5s 2U (5-methoxycarbonylmethyl-2-thiouridine), mediated by the elongator complex. The cytochrome b5/NADH cytochrome b5 reductase electron transfer system supports the catalytic activity of several sterol biosynthetic enzymes. This chain is NADH-cytochrome b5 reductase 1 (CBR1), found in Candida glabrata (strain ATCC 2001 / BCRC 20586 / JCM 3761 / NBRC 0622 / NRRL Y-65 / CBS 138) (Yeast).